A 105-amino-acid chain; its full sequence is Small ribosomal subunit protein uS10 (105 aa).

This sequence belongs to the universal ribosomal protein uS10 family. Part of the 30S ribosomal subunit.

Functionally, involved in the binding of tRNA to the ribosomes. This chain is Small ribosomal subunit protein uS10, found in Maridesulfovibrio salexigens (strain ATCC 14822 / DSM 2638 / NCIMB 8403 / VKM B-1763) (Desulfovibrio salexigens).